Reading from the N-terminus, the 63-residue chain is Large ribosomal subunit protein bL32 (63 aa).

The segment covering 1–18 has biased composition (basic residues); it reads MAHPKRRISRSRRDKRRA. Residues 1-27 are disordered; sequence MAHPKRRISRSRRDKRRAQYNAKTKAP.

This sequence belongs to the bacterial ribosomal protein bL32 family.

This is Large ribosomal subunit protein bL32 from Chloroherpeton thalassium (strain ATCC 35110 / GB-78).